The primary structure comprises 177 residues: Probable phospholipid hydroperoxide glutathione peroxidase (177 aa).

The active site involves Cys-42.

It belongs to the glutathione peroxidase family.

Its subcellular location is the cytoplasm. It carries out the reaction a hydroperoxy polyunsaturated fatty acid + 2 glutathione = a hydroxy polyunsaturated fatty acid + glutathione disulfide + H2O. Protects cells and enzymes from oxidative damage, by catalyzing the reduction of hydrogen peroxide, lipid peroxides and organic hydroperoxide, by glutathione. In Encephalitozoon cuniculi (strain GB-M1) (Microsporidian parasite), this protein is Probable phospholipid hydroperoxide glutathione peroxidase.